Here is an 898-residue protein sequence, read N- to C-terminus: Netrin receptor UNC5A (898 aa).

A signal peptide spans 1 to 25 (MAVRPGLWPALLGIVLTAWLRGSGA). The Extracellular segment spans residues 26 to 361 (QQSATVANPV…TSSGPEDVAL (336 aa)). The Ig-like domain occupies 44 to 141 (PHFLVEPEDV…SGTTKSQKAY (98 aa)). Intrachain disulfides connect Cys-65-Cys-126, Cys-77-Cys-124, and Cys-170-Cys-221. N-linked (GlcNAc...) asparagine glycosylation is found at Asn-107 and Asn-218. The Ig-like C2-type domain maps to 155–234 (PLAKEVSLEQ…NIVARRRSAS (80 aa)). TSP type-1 domains lie at 242 to 296 (NGGW…TLCP) and 298 to 350 (DGSW…DLCL). 3 C-linked (Man) tryptophan glycosylation sites follow: Trp-245, Trp-248, and Trp-251. 3 disulfides stabilise this stretch: Cys-254–Cys-291, Cys-258–Cys-295, and Cys-269–Cys-281. Trp-301 and Trp-304 each carry a C-linked (Man) tryptophan glycan. 3 disulfide bridges follow: Cys-310–Cys-344, Cys-314–Cys-349, and Cys-322–Cys-334. Asn-343 carries N-linked (GlcNAc...) asparagine glycosylation. The helical transmembrane segment at 362-382 (YIGLVAVAVCLILLLLVLVLI) threads the bilayer. Topologically, residues 383–898 (YCRKKEGLDS…GLFTVSEAEC (516 aa)) are cytoplasmic. A ZU5 domain is found at 497–640 (NMAYGTFNFL…LGRFALVGEA (144 aa)). Residues 661-679 (SLEYNIRVYCLHDTHDALK) are interaction with DCC. The 81-residue stretch at 817–897 (QKIITSLDPP…AGLFTVSEAE (81 aa)) folds into the Death domain.

It belongs to the unc-5 family. Homodimer and homooligomer. Interacts with the cytoplasmic part of DCC. Interacts with MAGED1. Interacts with PRKCABP, possibly mediating some interaction with PKC. Interacts (via extracellular domain) with FLRT2 (via extracellular domain). Interacts (via extracellular domain) with FLRT3 (via extracellular domain). Post-translationally, phosphorylated on cytoplasmic tyrosine residues. Phosphorylated by PKC in vitro. In terms of processing, proteolytically cleaved by caspases during apoptosis. The cleavage does not take place when the receptor is associated with netrin ligand. Its cleavage by caspases is required to induce apoptosis. The two extracellular TSRs of UNC5A contain WxxWxxWxxC motifs that can be C-mannosylated on all tryptophans. DPY19L1 preferentially mannosylates the first two tryptophans and DPY19L3 prefers the third. C-mannosylation by DPY19L1 is required for transport of UNC5A from the endoplasmic reticulum to the cell surface. In terms of tissue distribution, restricted to central nervous system.

It localises to the cell membrane. It is found in the membrane raft. Its subcellular location is the cell projection. The protein resides in the neuron projection. In terms of biological role, receptor for netrin required for axon guidance. Functions in the netrin signaling pathway and promotes neurite outgrowth in response to NTN1. Mediates axon repulsion of neuronal growth cones in the developing nervous system in response to netrin. Axon repulsion in growth cones may be mediated by its association with DCC that may trigger signaling for repulsion. It also acts as a dependence receptor required for apoptosis induction when not associated with netrin ligand. The sequence is that of Netrin receptor UNC5A (Unc5a) from Mus musculus (Mouse).